The sequence spans 180 residues: Thioredoxin 3 (180 aa).

The Cytoplasmic segment spans residues 1 to 3 (MAL). Residues 4–24 (ICIGSVCFSLFHIGVIILLII) traverse the membrane as a helical; Signal-anchor for type II membrane protein segment. The Lumenal segment spans residues 25-180 (NYFSSHIKKI…FQKYCLEKAK (156 aa)). In terms of domain architecture, Thioredoxin spans 29–176 (SHIKKIFPSF…IEKAFQKYCL (148 aa)). Catalysis depends on nucleophile residues C99 and C102. C99 and C102 are oxidised to a cystine.

Belongs to the thioredoxin family. In terms of processing, the disulfide bond between Cys-99 and Cys-102 acts as a redox-active center and is reduced by thioredoxin reductase TRXR.

Its subcellular location is the endoplasmic reticulum membrane. In terms of biological role, participates in various redox reactions through the reversible oxidation of its active center dithiol to a disulfide and catalyzes dithiol-disulfide exchange reactions. In Plasmodium falciparum (isolate 3D7), this protein is Thioredoxin 3.